The sequence spans 244 residues: Serine-rich single-pass membrane protein 1 (244 aa).

Residues 35–55 (CGTIGSFLLWYFVIVFVLMFF) form a helical membrane-spanning segment. Disordered regions lie at residues 65–114 (DKKD…PVTN), 126–191 (QRRA…LGSY), and 210–244 (LAHH…FSKF). Residues 80–94 (ASKETSCKRQSKDSA) are compositionally biased toward basic and acidic residues. 2 stretches are compositionally biased toward polar residues: residues 96–114 (DPSQ…PVTN) and 132–142 (QSQFNEVNQNQ). Positions 161–176 (SWKESESEHHPSPDSI) are enriched in basic and acidic residues.

Its subcellular location is the membrane. This is Serine-rich single-pass membrane protein 1 (SSMEM1) from Homo sapiens (Human).